Consider the following 66-residue polypeptide: Large ribosomal subunit protein uL29 (66 aa).

The protein belongs to the universal ribosomal protein uL29 family.

This Thermococcus gammatolerans (strain DSM 15229 / JCM 11827 / EJ3) protein is Large ribosomal subunit protein uL29.